The primary structure comprises 410 residues: Probable serine/threonine-protein kinase PBL8 (410 aa).

A compositionally biased stretch (basic and acidic residues) spans Met1–Ala10. The tract at residues Met1 to Ser45 is disordered. The N-myristoyl glycine moiety is linked to residue Gly2. The S-palmitoyl cysteine moiety is linked to residue Cys4. A Phosphothreonine modification is found at Thr58. A Protein kinase domain is found at Phe69–Gln350. Residues Leu75–Val83 and Lys104 each bind ATP. A Phosphotyrosine modification is found at Tyr149. The active-site Proton acceptor is the Asp199. Phosphoserine is present on residues Ser203 and Ser233. Phosphothreonine is present on residues Thr234 and Thr239. Residue Tyr247 is modified to Phosphotyrosine.

This sequence belongs to the protein kinase superfamily. Ser/Thr protein kinase family. Interacts with the Xanthomonas campestris effector XopAC/AvrAC.

It localises to the cell membrane. The catalysed reaction is L-seryl-[protein] + ATP = O-phospho-L-seryl-[protein] + ADP + H(+). The enzyme catalyses L-threonyl-[protein] + ATP = O-phospho-L-threonyl-[protein] + ADP + H(+). May be involved in plant defense signaling. The protein is Probable serine/threonine-protein kinase PBL8 of Arabidopsis thaliana (Mouse-ear cress).